The following is a 65-amino-acid chain: MPKVKTNRSAAKRFRITKNGKIMRNHAYRSHKTGKKRRNALRALRKKDVVSSADKNRVLRLLGKK.

The protein belongs to the bacterial ribosomal protein bL35 family.

This chain is Large ribosomal subunit protein bL35, found in Thermotoga maritima (strain ATCC 43589 / DSM 3109 / JCM 10099 / NBRC 100826 / MSB8).